A 605-amino-acid polypeptide reads, in one-letter code: Elongation factor 4 (605 aa).

The tr-type G domain occupies 10–192 (KNIRNFAIVA…AIVMRLPPPH (183 aa)). Residues 22 to 27 (DHGKST) and 139 to 142 (NKVD) each bind GTP.

Belongs to the TRAFAC class translation factor GTPase superfamily. Classic translation factor GTPase family. LepA subfamily.

The protein localises to the cell inner membrane. It carries out the reaction GTP + H2O = GDP + phosphate + H(+). Functionally, required for accurate and efficient protein synthesis under certain stress conditions. May act as a fidelity factor of the translation reaction, by catalyzing a one-codon backward translocation of tRNAs on improperly translocated ribosomes. Back-translocation proceeds from a post-translocation (POST) complex to a pre-translocation (PRE) complex, thus giving elongation factor G a second chance to translocate the tRNAs correctly. Binds to ribosomes in a GTP-dependent manner. The protein is Elongation factor 4 of Chelativorans sp. (strain BNC1).